A 372-amino-acid chain; its full sequence is Dual-specificity RNA methyltransferase RlmN (372 aa).

Glu92 functions as the Proton acceptor in the catalytic mechanism. Residues 98 to 337 (ETDRATLCVS…VILRKTRGDD (240 aa)) form the Radical SAM core domain. Cys105 and Cys342 are oxidised to a cystine. The [4Fe-4S] cluster site is built by Cys112, Cys116, and Cys119. S-adenosyl-L-methionine contacts are provided by residues 166–167 (GE), Ser198, 220–222 (SLH), and Asn299. The S-methylcysteine intermediate role is filled by Cys342.

The protein belongs to the radical SAM superfamily. RlmN family. It depends on [4Fe-4S] cluster as a cofactor.

Its subcellular location is the cytoplasm. It catalyses the reaction adenosine(2503) in 23S rRNA + 2 reduced [2Fe-2S]-[ferredoxin] + 2 S-adenosyl-L-methionine = 2-methyladenosine(2503) in 23S rRNA + 5'-deoxyadenosine + L-methionine + 2 oxidized [2Fe-2S]-[ferredoxin] + S-adenosyl-L-homocysteine. The catalysed reaction is adenosine(37) in tRNA + 2 reduced [2Fe-2S]-[ferredoxin] + 2 S-adenosyl-L-methionine = 2-methyladenosine(37) in tRNA + 5'-deoxyadenosine + L-methionine + 2 oxidized [2Fe-2S]-[ferredoxin] + S-adenosyl-L-homocysteine. In terms of biological role, specifically methylates position 2 of adenine 2503 in 23S rRNA and position 2 of adenine 37 in tRNAs. m2A2503 modification seems to play a crucial role in the proofreading step occurring at the peptidyl transferase center and thus would serve to optimize ribosomal fidelity. This is Dual-specificity RNA methyltransferase RlmN from Histophilus somni (strain 129Pt) (Haemophilus somnus).